Here is a 484-residue protein sequence, read N- to C-terminus: Sodium/pantothenate symporter (484 aa).

The next 13 membrane-spanning stretches (helical) occupy residues 3–23 (LGIILPLIIYLTFVFGAAIFA), 45–65 (GFVLAMTTASTYASASSFVGG), 74–94 (LGWVLLAMIQVPVVWLALGAL), 124–144 (VWLSSLALLLAFFAAMTVQFI), 162–182 (LLLFALTVGIYTFIGGFRAVV), 190–210 (TVMIFGTIILLIGTIYALGGV), 238–258 (FMASFWILVCFGVVGLPHTAV), 273–293 (MLIGTIVLSIIMLGMHLAGAL), 307–327 (VIPTLMIKVLPPIVAGIFLAA), 366–386 (VSYFSSIITLILTALLIFAAL), 397–417 (LFAFGGLEAAFLWVIVLGIYW), 424–444 (GALSSMIIGLGSYILLTQLGI), and 446–466 (LFNFHQIVPSLVFGLIAFLVG).

It belongs to the sodium:solute symporter (SSF) (TC 2.A.21) family.

The protein localises to the cell inner membrane. The enzyme catalyses (R)-pantothenate(in) + Na(+)(in) = (R)-pantothenate(out) + Na(+)(out). Its function is as follows. Catalyzes the sodium-dependent uptake of extracellular pantothenate. The chain is Sodium/pantothenate symporter (panF) from Haemophilus influenzae (strain ATCC 51907 / DSM 11121 / KW20 / Rd).